A 469-amino-acid polypeptide reads, in one-letter code: Proline--tRNA ligase (469 aa).

This sequence belongs to the class-II aminoacyl-tRNA synthetase family. ProS type 3 subfamily. In terms of assembly, homodimer.

It is found in the cytoplasm. The catalysed reaction is tRNA(Pro) + L-proline + ATP = L-prolyl-tRNA(Pro) + AMP + diphosphate. Its function is as follows. Catalyzes the attachment of proline to tRNA(Pro) in a two-step reaction: proline is first activated by ATP to form Pro-AMP and then transferred to the acceptor end of tRNA(Pro). This chain is Proline--tRNA ligase, found in Methanobrevibacter smithii (strain ATCC 35061 / DSM 861 / OCM 144 / PS).